The primary structure comprises 468 residues: 6-phosphogluconate dehydrogenase, decarboxylating (468 aa).

NADP(+)-binding positions include 10–15 (GMAVMG), 33–35 (NRS), 74–76 (VKA), and asparagine 102. Substrate-binding positions include asparagine 102 and 128 to 130 (SGG). The active-site Proton acceptor is the lysine 183. Residue 186-187 (HN) participates in substrate binding. Residue glutamate 190 is the Proton donor of the active site. Residues tyrosine 191, lysine 260, arginine 287, arginine 445, and histidine 451 each coordinate substrate.

This sequence belongs to the 6-phosphogluconate dehydrogenase family. Homodimer.

The enzyme catalyses 6-phospho-D-gluconate + NADP(+) = D-ribulose 5-phosphate + CO2 + NADPH. Its pathway is carbohydrate degradation; pentose phosphate pathway; D-ribulose 5-phosphate from D-glucose 6-phosphate (oxidative stage): step 3/3. Its function is as follows. Catalyzes the oxidative decarboxylation of 6-phosphogluconate to ribulose 5-phosphate and CO(2), with concomitant reduction of NADP to NADPH. The chain is 6-phosphogluconate dehydrogenase, decarboxylating (gnd) from Salmonella typhimurium (strain LT2 / SGSC1412 / ATCC 700720).